The primary structure comprises 1854 residues: Protein virilizer (1854 aa).

Ser-186 is modified (phosphoserine). Composition is skewed to basic and acidic residues over residues 202–214 and 236–259; these read YHQH…QREM and THSE…DWSR. 5 disordered regions span residues 202-361, 777-821, 1570-1589, 1720-1788, and 1804-1854; these read YHQH…EIIG, NPEE…GKPV, TSTE…ASSC, VRGR…NRGS, and IGSP…SYLR. Phosphoserine occurs at positions 258, 260, and 276. Positions 275-285 are enriched in basic and acidic residues; sequence RSRSVVDEHKW. Thr-288 is subject to Phosphothreonine. Phosphoserine is present on Ser-295. Thr-297 is modified (phosphothreonine). A phosphoserine mark is found at Ser-301 and Ser-312. Composition is skewed to basic and acidic residues over residues 325–343 and 777–796; these read HSSE…EDRS and NPEE…KAME. Positions 779–808 form a coiled coil; that stretch reads EEKEEKAEKSDAEDKAMEVENEAVEAGGEK. 2 stretches are compositionally biased toward low complexity: residues 1738-1748 and 1816-1838; these read SRPPNTSRPPS and SYRS…PHYS.

The protein belongs to the vir family. Component of the WMM complex, a N6-methyltransferase complex composed of a catalytic subcomplex, named MAC, and of an associated subcomplex, named MACOM. The MAC subcomplex is composed of Ime4/Mettl3 and Mettl14. The MACOM subcomplex is composed of fl(2)d, Flacc/Xio, Hakai, vir, and, in some cases of nito. Part of a complex containing fl(2)d, Sxl and vir.

The protein resides in the nucleus. Its function is as follows. Associated component of the WMM complex, a complex that mediates N6-methyladenosine (m6A) methylation of mRNAs, a modification that plays a role in the efficiency of mRNA splicing and is required for sex determination. Required for sex determination and dosage compensation via Sxl alternative splicing: m6A methylation acts as a key regulator of Sxl pre-mRNA and promotes female-specific alternative splicing of Sxl, which determines female physiognomy. M6A methylation is also required for neuronal functions. Required for proper inclusion of regulated exons in Ubx transcripts, leading to isoforms Ia/b and IIa/b. This is Protein virilizer from Drosophila melanogaster (Fruit fly).